We begin with the raw amino-acid sequence, 316 residues long: uncharacterized protein (316 aa).

4 helical membrane-spanning segments follow: residues 74 to 94, 99 to 119, 166 to 186, and 188 to 208; these read IPVLGLLTVLPLGLFIFGMAI, WPYAALLVFLLFLFTLLIFLG, MAGCAVPFFAGVGTLLGTVLG, and VEGFVGAVPGAAIGAMAGYIF.

The protein localises to the cell membrane. This is an uncharacterized protein from Synechocystis sp. (strain ATCC 27184 / PCC 6803 / Kazusa).